The chain runs to 479 residues: Transcriptional regulator ERG (479 aa).

Positions 34 to 47 (TASSSSDYGQTSKM) are enriched in polar residues. 2 disordered regions span residues 34-56 (TASS…QQDW) and 72-92 (PSQV…KGGK). A phosphoserine mark is found at serine 48, serine 81, and serine 96. The 87-residue stretch at 113-199 (MPPPNMTTNE…SHLHYLRETP (87 aa)) folds into the PNT domain. Positions 242–293 (QRITTRPDLPYEPPRRSAWTGHGHPTPQSKAAQPSPSTVPKTEDQRPQLDPY) are disordered. Positions 267–281 (TPQSKAAQPSPSTVP) are enriched in polar residues. A Glycyl lysine isopeptide (Lys-Gly) (interchain with G-Cter in SUMO2) cross-link involves residue lysine 282. The ETS DNA-binding region spans 311 to 391 (IQLWQFLLEL…HGKRYAYKFD (81 aa)).

This sequence belongs to the ETS family. In terms of assembly, identified in a IGF2BP1-dependent mRNP granule complex containing untranslated mRNAs. Interacts with SETDB1.

Its subcellular location is the nucleus. The protein localises to the cytoplasm. Functionally, transcriptional regulator. May participate in transcriptional regulation through the recruitment of SETDB1 histone methyltransferase and subsequent modification of local chromatin structure. The sequence is that of Transcriptional regulator ERG (ERG) from Homo sapiens (Human).